A 174-amino-acid chain; its full sequence is Shikimate kinase 2 (174 aa).

Residue 12 to 17 (GAGKTT) coordinates ATP. Mg(2+) is bound by residues threonine 16 and aspartate 32. Positions 34, 58, and 79 each coordinate substrate. An LID domain region spans residues 112–126 (EEYPQDTQRPTLTGR). Arginine 120 contacts ATP. Arginine 139 is a binding site for substrate.

This sequence belongs to the shikimate kinase family. AroL subfamily. As to quaternary structure, monomer. It depends on Mg(2+) as a cofactor.

It is found in the cytoplasm. The catalysed reaction is shikimate + ATP = 3-phosphoshikimate + ADP + H(+). It participates in metabolic intermediate biosynthesis; chorismate biosynthesis; chorismate from D-erythrose 4-phosphate and phosphoenolpyruvate: step 5/7. Functionally, catalyzes the specific phosphorylation of the 3-hydroxyl group of shikimic acid using ATP as a cosubstrate. This Serratia proteamaculans (strain 568) protein is Shikimate kinase 2.